The sequence spans 215 residues: Large ribosomal subunit protein uL1 (215 aa).

The protein belongs to the universal ribosomal protein uL1 family. As to quaternary structure, part of the 50S ribosomal subunit.

Binds directly to 23S rRNA. Probably involved in E site tRNA release. Functionally, protein L1 is also a translational repressor protein, it controls the translation of its operon by binding to its mRNA. The chain is Large ribosomal subunit protein uL1 from Cenarchaeum symbiosum (strain A).